The sequence spans 302 residues: Nucleotide-binding protein Rsph17029_0317 (302 aa).

15-22 is a binding site for ATP; it reads GPSGAGRT. A GTP-binding site is contributed by 62–65; sequence DVRN.

It belongs to the RapZ-like family.

Functionally, displays ATPase and GTPase activities. The chain is Nucleotide-binding protein Rsph17029_0317 from Cereibacter sphaeroides (strain ATCC 17029 / ATH 2.4.9) (Rhodobacter sphaeroides).